The chain runs to 119 residues: Membrane-anchored ubiquitin-fold protein 6 (119 aa).

One can recognise a Ubiquitin-like domain in the interval 8–76 (IELKFRLADG…NNRTLAESRL (69 aa)). Cys114 is lipidated: S-palmitoyl cysteine. A Cysteine methyl ester modification is found at Cys116. The S-geranylgeranyl cysteine moiety is linked to residue Cys116. A propeptide spans 117 to 119 (TIL) (removed in mature form).

As to expression, ubiquitous.

It is found in the cell membrane. Its function is as follows. May serve as docking site to facilitate the association of other proteins to the plasma membrane. The polypeptide is Membrane-anchored ubiquitin-fold protein 6 (MUB6) (Arabidopsis thaliana (Mouse-ear cress)).